Here is a 315-residue protein sequence, read N- to C-terminus: Putative steroid dehydrogenase 3 (315 aa).

NADP(+) is bound at residue 47 to 76 (ASWAVITGGTDGIGKSFSFELAKRGFNIYI). Residue tyrosine 202 is part of the active site.

This sequence belongs to the short-chain dehydrogenases/reductases (SDR) family. 17-beta-HSD 3 subfamily.

In Caenorhabditis elegans, this protein is Putative steroid dehydrogenase 3 (stdh-3).